The sequence spans 244 residues: Aspartate/glutamate leucyltransferase (244 aa).

It belongs to the R-transferase family. Bpt subfamily.

The protein resides in the cytoplasm. The enzyme catalyses N-terminal L-glutamyl-[protein] + L-leucyl-tRNA(Leu) = N-terminal L-leucyl-L-glutamyl-[protein] + tRNA(Leu) + H(+). The catalysed reaction is N-terminal L-aspartyl-[protein] + L-leucyl-tRNA(Leu) = N-terminal L-leucyl-L-aspartyl-[protein] + tRNA(Leu) + H(+). Functions in the N-end rule pathway of protein degradation where it conjugates Leu from its aminoacyl-tRNA to the N-termini of proteins containing an N-terminal aspartate or glutamate. The polypeptide is Aspartate/glutamate leucyltransferase (Bordetella parapertussis (strain 12822 / ATCC BAA-587 / NCTC 13253)).